A 457-amino-acid chain; its full sequence is Oxygen-independent coproporphyrinogen III oxidase (457 aa).

A Radical SAM core domain is found at 47 to 279 (LKNPMPLSLY…EILESLISFL (233 aa)). Tyr-56 is an S-adenosyl-L-methionine binding site. The [4Fe-4S] cluster site is built by Cys-62 and Cys-66. Residue Phe-68 participates in S-adenosyl-L-methionine binding. Cys-69 contacts [4Fe-4S] cluster. S-adenosyl-L-methionine contacts are provided by residues Gly-113, 114 to 115 (GT), Glu-147, Gln-174, Arg-186, Asp-211, Ala-245, and Ile-331.

It belongs to the anaerobic coproporphyrinogen-III oxidase family. As to quaternary structure, monomer. Requires [4Fe-4S] cluster as cofactor.

It localises to the cytoplasm. It catalyses the reaction coproporphyrinogen III + 2 S-adenosyl-L-methionine = protoporphyrinogen IX + 2 5'-deoxyadenosine + 2 L-methionine + 2 CO2. The protein operates within porphyrin-containing compound metabolism; protoporphyrin-IX biosynthesis; protoporphyrinogen-IX from coproporphyrinogen-III (AdoMet route): step 1/1. Its function is as follows. Involved in the heme biosynthesis. Catalyzes the anaerobic oxidative decarboxylation of propionate groups of rings A and B of coproporphyrinogen III to yield the vinyl groups in protoporphyrinogen IX. In Helicobacter pylori (strain J99 / ATCC 700824) (Campylobacter pylori J99), this protein is Oxygen-independent coproporphyrinogen III oxidase (hemN).